A 216-amino-acid chain; its full sequence is Pyrophosphatase PpaX (216 aa).

Asp12 (nucleophile) is an active-site residue.

This sequence belongs to the HAD-like hydrolase superfamily. PpaX family. Requires Mg(2+) as cofactor.

It carries out the reaction diphosphate + H2O = 2 phosphate + H(+). Its function is as follows. Hydrolyzes pyrophosphate formed during P-Ser-HPr dephosphorylation by HPrK/P. Might play a role in controlling the intracellular pyrophosphate pool. This Bacillus pumilus (strain SAFR-032) protein is Pyrophosphatase PpaX.